The primary structure comprises 298 residues: MPGFTCCVPGCYSNSHRDKGLHFYTFPKDPELRCLWLKNVSRGGVSGCFSTFQPTNGHRVCSLHFQGGRKSYSIKVPTIFPLRGVNEKRTRRSSTKKRQQPNYTPAATTVLVTGLPGQEEQEVLELTAGGAEMMLLSTTAGMGATITNVEGSSAVIGATIDAMGTAAVERGSVAAPSNLAVKLDVGEAHAISTHFSSDASHGSHQQLQVVVVGDEPFPSVDCWPSLLGSDHSYSMSSGTTTEELLRKLNEQRDIIALMEVKMKEMKSSIKHLKVTEVKLREELRQKDKDKVSPMIKSN.

The THAP-type zinc-finger motif lies at Cys-6–His-64. The stretch at Glu-242–Leu-283 forms a coiled coil.

Belongs to the THAP11 family.

It is found in the nucleus. Functionally, transcriptional repressor that plays a central role for embryogenesis and the pluripotency of embryonic stem (ES) cells. Sequence-specific DNA-binding factor that represses gene expression in pluripotent ES cells by directly binding to key genetic loci and recruiting epigenetic modifiers. The chain is THAP domain-containing protein 11 (thap11) from Xenopus laevis (African clawed frog).